The sequence spans 650 residues: Acetyl-coenzyme A synthetase (650 aa).

Residues 189-192 (RGGK), Thr-307, and Asn-331 contribute to the CoA site. ATP-binding positions include 383 to 385 (GEP), 407 to 412 (DTWWQT), Asp-496, and Arg-511. CoA is bound at residue Ser-519. Arg-522 contacts ATP. Mg(2+) is bound by residues Val-533, His-535, and Val-538. Arg-580 serves as a coordination point for CoA. Residue Lys-605 is modified to N6-acetyllysine.

Belongs to the ATP-dependent AMP-binding enzyme family. It depends on Mg(2+) as a cofactor. Acetylated. Deacetylation by the SIR2-homolog deacetylase activates the enzyme.

It carries out the reaction acetate + ATP + CoA = acetyl-CoA + AMP + diphosphate. Catalyzes the conversion of acetate into acetyl-CoA (AcCoA), an essential intermediate at the junction of anabolic and catabolic pathways. AcsA undergoes a two-step reaction. In the first half reaction, AcsA combines acetate with ATP to form acetyl-adenylate (AcAMP) intermediate. In the second half reaction, it can then transfer the acetyl group from AcAMP to the sulfhydryl group of CoA, forming the product AcCoA. The sequence is that of Acetyl-coenzyme A synthetase from Syntrophobacter fumaroxidans (strain DSM 10017 / MPOB).